Here is a 382-residue protein sequence, read N- to C-terminus: Sphingoid long-chain base transporter RSB1 (382 aa).

The Extracellular segment spans residues methionine 1–arginine 34. Residues asparagine 3 and asparagine 6 are each glycosylated (N-linked (GlcNAc...) asparagine). Residues phenylalanine 35–leucine 55 traverse the membrane as a helical segment. The Cytoplasmic portion of the chain corresponds to methionine 56–arginine 57. The helical transmembrane segment at glutamine 58–glycine 78 threads the bilayer. Topologically, residues arginine 79–aspartate 90 are extracellular. A helical membrane pass occupies residues alanine 91–tyrosine 111. At tyrosine 112–serine 135 the chain is on the cytoplasmic side. Residues phenylalanine 136–cysteine 156 traverse the membrane as a helical segment. Residues glycine 157 to histidine 171 are Extracellular-facing. The chain crosses the membrane as a helical span at residues valine 172–phenylalanine 192. At histidine 193–arginine 241 the chain is on the cytoplasmic side. The helical transmembrane segment at tryptophan 242–cysteine 262 threads the bilayer. Residues cysteine 263–glutamate 281 lie on the Extracellular side of the membrane. A helical transmembrane segment spans residues tryptophan 282–phenylalanine 302. The Cytoplasmic portion of the chain corresponds to histidine 303–leucine 382.

This sequence belongs to the lipid-translocating exporter (LTE) (TC 9.A.26.1) family.

It is found in the cell membrane. Its function is as follows. Catalyzes the ATP-dependent translocation of sphingoid long-chain bases (LCBs) from the cytoplasmic site toward the extracytoplasmic side of the membrane (flip-flop). Involved in the establishment of the functional lipid asymmetry of the plasma membrane. Regulates intracellular levels of LCBs, sphingolipid precursors that are growth inhibitory at increased levels. The polypeptide is Sphingoid long-chain base transporter RSB1 (RSB1) (Saccharomyces cerevisiae (strain RM11-1a) (Baker's yeast)).